The primary structure comprises 156 residues: uncharacterized protein (156 aa).

It belongs to the mimivirus L223/L227/L812 family.

This is an uncharacterized protein from Acanthamoeba polyphaga mimivirus (APMV).